The primary structure comprises 184 residues: dCTP deaminase (184 aa).

107-112 (KSTIAR) contributes to the dCTP binding site. The active-site Proton donor/acceptor is Glu133. DCTP-binding residues include Gln152, Tyr166, and Gln176.

The protein belongs to the dCTP deaminase family. Homotrimer.

It carries out the reaction dCTP + H2O + H(+) = dUTP + NH4(+). The protein operates within pyrimidine metabolism; dUMP biosynthesis; dUMP from dCTP (dUTP route): step 1/2. Its function is as follows. Catalyzes the deamination of dCTP to dUTP. This chain is dCTP deaminase, found in Roseiflexus castenholzii (strain DSM 13941 / HLO8).